The sequence spans 447 residues: Tubulin beta-1 chain (447 aa).

GTP-binding residues include Q11, E69, S138, G142, T143, G144, N204, and N226. E69 provides a ligand contact to Mg(2+). Residues 428–447 (ATADEDAEFDEEQEQEIEDN) are disordered. Over residues 429–447 (TADEDAEFDEEQEQEIEDN) the composition is skewed to acidic residues.

It belongs to the tubulin family. In terms of assembly, dimer of alpha and beta chains. A typical microtubule is a hollow water-filled tube with an outer diameter of 25 nm and an inner diameter of 15 nM. Alpha-beta heterodimers associate head-to-tail to form protofilaments running lengthwise along the microtubule wall with the beta-tubulin subunit facing the microtubule plus end conferring a structural polarity. Microtubules usually have 13 protofilaments but different protofilament numbers can be found in some organisms and specialized cells. It depends on Mg(2+) as a cofactor.

Its subcellular location is the cytoplasm. It is found in the cytoskeleton. Functionally, tubulin is the major constituent of microtubules, a cylinder consisting of laterally associated linear protofilaments composed of alpha- and beta-tubulin heterodimers. Microtubules grow by the addition of GTP-tubulin dimers to the microtubule end, where a stabilizing cap forms. Below the cap, tubulin dimers are in GDP-bound state, owing to GTPase activity of alpha-tubulin. This is Tubulin beta-1 chain from Manduca sexta (Tobacco hawkmoth).